A 715-amino-acid polypeptide reads, in one-letter code: Polyribonucleotide nucleotidyltransferase (715 aa).

Positions 497 and 503 each coordinate Mg(2+). The KH domain occupies 564–623 (PRLLTMKIDPEQIGLVIGPGGKTIKSITEQTGSKIDIADDGTVTIAAIQAKKAERARDLI). An S1 motif domain is found at 633–701 (GEVYLGRVTR…NKGRLNLTRL (69 aa)).

The protein belongs to the polyribonucleotide nucleotidyltransferase family. The cofactor is Mg(2+).

Its subcellular location is the cytoplasm. The enzyme catalyses RNA(n+1) + phosphate = RNA(n) + a ribonucleoside 5'-diphosphate. Functionally, involved in mRNA degradation. Catalyzes the phosphorolysis of single-stranded polyribonucleotides processively in the 3'- to 5'-direction. This chain is Polyribonucleotide nucleotidyltransferase, found in Crocosphaera subtropica (strain ATCC 51142 / BH68) (Cyanothece sp. (strain ATCC 51142)).